We begin with the raw amino-acid sequence, 357 residues long: Neuronal-specific septin-3 (357 aa).

A compositionally biased stretch (basic and acidic residues) spans 1 to 10 (MSKGLPETRT). The tract at residues 1–29 (MSKGLPETRTDAAMSELVPEPRPKPAVPM) is disordered. A Septin-type G domain is found at 58-330 (TGFDFNIMVV…ETYRAKRLND (273 aa)). Residues 68-75 (GQSGLGKS) are G1 motif. 68-75 (GQSGLGKS) provides a ligand contact to GTP. Ser-91 carries the post-translational modification Phosphoserine. Thr-102 lines the GTP pocket. Residues 125 to 128 (DTPG) are G3 motif. A G4 motif region spans residues 207–210 (AKAD). Residues 208–216 (KADTMTLEE), Gly-264, and Arg-279 contribute to the GTP site.

The protein belongs to the TRAFAC class TrmE-Era-EngA-EngB-Septin-like GTPase superfamily. Septin GTPase family. Septins polymerize into heterooligomeric protein complexes that form filaments, and can associate with cellular membranes, actin filaments and microtubules. GTPase activity is required for filament formation. Post-translationally, phosphorylated by PKG on serine residues. Phosphorylated by PKG on Ser-91.

Its subcellular location is the cytoplasm. It is found in the cytoskeleton. The protein resides in the synapse. Its function is as follows. Filament-forming cytoskeletal GTPase. May play a role in cytokinesis (Potential). The protein is Neuronal-specific septin-3 of Bos taurus (Bovine).